Consider the following 196-residue polypeptide: Putative NADH dehydrogenase/NAD(P)H nitroreductase XOO4023 (196 aa).

This sequence belongs to the nitroreductase family. HadB/RutE subfamily. FMN is required as a cofactor.

This chain is Putative NADH dehydrogenase/NAD(P)H nitroreductase XOO4023, found in Xanthomonas oryzae pv. oryzae (strain MAFF 311018).